The following is a 262-amino-acid chain: Ribonuclease 3 (262 aa).

In terms of domain architecture, RNase III spans 18 to 141 (LATFLKNLDI…LVGAIYEDMG (124 aa)). Residue glutamate 59 coordinates Mg(2+). Residue aspartate 63 is part of the active site. Residues aspartate 127 and glutamate 130 each coordinate Mg(2+). Glutamate 130 is an active-site residue.

The protein belongs to the ribonuclease III family. As to quaternary structure, homodimer. The cofactor is Mg(2+).

The protein resides in the cytoplasm. It catalyses the reaction Endonucleolytic cleavage to 5'-phosphomonoester.. Its function is as follows. Digests double-stranded RNA. Involved in the processing of primary rRNA transcript to yield the immediate precursors to the large and small rRNAs (23S and 16S). Processes some mRNAs, and tRNAs when they are encoded in the rRNA operon. Processes pre-crRNA and tracrRNA of type II CRISPR loci if present in the organism. The chain is Ribonuclease 3 from Mycoplasma genitalium (strain ATCC 33530 / DSM 19775 / NCTC 10195 / G37) (Mycoplasmoides genitalium).